Consider the following 358-residue polypeptide: Thiol protease aleurain (358 aa).

A signal peptide spans 1–21 (MSAKTILSSVVLVVLVAASAA). The segment at 22-42 (ANIGFDESNPIRMVSDGLREV) is interaction with VSR1. A propeptide spans 22 to 140 (ANIGFDESNP…KGSHKVTEAA (119 aa)) (activation peptide). Residue asparagine 125 is glycosylated (N-linked (GlcNAc...) asparagine). 2 disulfide bridges follow: cysteine 162–cysteine 205 and cysteine 196–cysteine 238. Cysteine 165 is an active-site residue. A glycan (N-linked (GlcNAc...) asparagine) is linked at asparagine 254. A disulfide bond links cysteine 296 and cysteine 346. Catalysis depends on residues histidine 305 and asparagine 325.

Belongs to the peptidase C1 family. Interacts with VSR1/BP80B. Expressed in leaves (at protein level).

Its subcellular location is the vacuole. It catalyses the reaction Hydrolysis of proteins, acting as an aminopeptidase (notably, cleaving Arg-|-Xaa bonds) as well as an endopeptidase.. May play a role in proteolysis leading to mobilization of nitrogen during senescence and starvation. The protein is Thiol protease aleurain of Arabidopsis thaliana (Mouse-ear cress).